We begin with the raw amino-acid sequence, 309 residues long: Ribonuclease Z (309 aa).

7 residues coordinate Zn(2+): H63, H65, D67, H68, H141, D212, and H270. D67 serves as the catalytic Proton acceptor.

This sequence belongs to the RNase Z family. As to quaternary structure, homodimer. Requires Zn(2+) as cofactor.

It carries out the reaction Endonucleolytic cleavage of RNA, removing extra 3' nucleotides from tRNA precursor, generating 3' termini of tRNAs. A 3'-hydroxy group is left at the tRNA terminus and a 5'-phosphoryl group is left at the trailer molecule.. In terms of biological role, zinc phosphodiesterase, which displays some tRNA 3'-processing endonuclease activity. Probably involved in tRNA maturation, by removing a 3'-trailer from precursor tRNA. The polypeptide is Ribonuclease Z (Limosilactobacillus reuteri (strain DSM 20016) (Lactobacillus reuteri)).